The primary structure comprises 1241 residues: Dinoflagellate luciferase (1241 aa).

Luciferase regions lie at residues 114–465 (KTGL…IKRD), 491–842 (DQGF…TKRD), and 868–1218 (EKGF…KKRD).

This sequence belongs to the calycin superfamily. Luciferase family.

It is found in the cytoplasmic vesicle. The enzyme catalyses dinoflagellate luciferin + O2 = oxidized dinoflagellate luciferin + hnu + H2O + H(+). With respect to regulation, regulated by pH: upon acidification, at a pH of 6.3, dinoflagellate luciferin is released from luciferin-binding protein LBP, allowing the interaction between Dinoflagellate luciferase and its substrate luciferin. Emits blue light flashes with a wavelength of 475 nm during the night phase. The chain is Dinoflagellate luciferase from Lingulodinium polyedra (Dinoflagellate).